The chain runs to 249 residues: Uridylate kinase (249 aa).

15-18 (KLSG) is an ATP binding site. Positions 23-28 (GEEGFG) are involved in allosteric activation by GTP. G57 lines the UMP pocket. ATP-binding residues include G58 and R62. Residues D77 and 138 to 145 (TGNPFFTT) contribute to the UMP site. T165, F171, and D174 together coordinate ATP.

The protein belongs to the UMP kinase family. In terms of assembly, homohexamer.

It is found in the cytoplasm. It carries out the reaction UMP + ATP = UDP + ADP. The protein operates within pyrimidine metabolism; CTP biosynthesis via de novo pathway; UDP from UMP (UMPK route): step 1/1. With respect to regulation, allosterically activated by GTP. Inhibited by UTP. Catalyzes the reversible phosphorylation of UMP to UDP. The chain is Uridylate kinase from Psychromonas ingrahamii (strain DSM 17664 / CCUG 51855 / 37).